We begin with the raw amino-acid sequence, 286 residues long: 33 kDa chaperonin (286 aa).

2 disulfides stabilise this stretch: C233/C235 and C267/C270.

Belongs to the HSP33 family. Under oxidizing conditions two disulfide bonds are formed involving the reactive cysteines. Under reducing conditions zinc is bound to the reactive cysteines and the protein is inactive.

The protein localises to the cytoplasm. Its function is as follows. Redox regulated molecular chaperone. Protects both thermally unfolding and oxidatively damaged proteins from irreversible aggregation. Plays an important role in the bacterial defense system toward oxidative stress. In Histophilus somni (strain 2336) (Haemophilus somnus), this protein is 33 kDa chaperonin.